A 220-amino-acid polypeptide reads, in one-letter code: Ribonuclease HII (220 aa).

One can recognise an RNase H type-2 domain in the interval 32-220 (KHIAGIDEAG…FAPIKGCFDC (189 aa)). 3 residues coordinate a divalent metal cation: Asp-38, Glu-39, and Asp-130.

The protein belongs to the RNase HII family. Mn(2+) is required as a cofactor. Mg(2+) serves as cofactor.

It localises to the cytoplasm. The catalysed reaction is Endonucleolytic cleavage to 5'-phosphomonoester.. Endonuclease that specifically degrades the RNA of RNA-DNA hybrids. The protein is Ribonuclease HII of Brucella abortus (strain 2308).